A 3933-amino-acid polypeptide reads, in one-letter code: Circularly permutated Ras protein 2 (3933 aa).

Residues 12–46 (VHEVKKQELESILLQQEQEKQAKEEKESIKDTDDK) are a coiled coil. Disordered stretches follow at residues 23–101 (ILLQ…IEKK), 136–189 (DIRE…RKET), 1022–1054 (ITTT…TTTT), and 2817–2839 (NNNN…RPTR). Residues 28 to 62 (EQEKQAKEEKESIKDTDDKPIEDTEHSTNNDKPIE) show a composition bias toward basic and acidic residues. A compositionally biased stretch (low complexity) spans 70 to 92 (TPTTTTTTKPTDEASSSSNNNNN). Residues 136-145 (DIREPTDKPF) are compositionally biased toward basic and acidic residues. The segment covering 146–156 (ENTSNIETTRQ) has biased composition (polar residues). Residues 167–215 (KTEAERLEQEQKQKQYDENRKETDRKLELELERLKNKKEEVEQIRAYFQ) are a coiled coil. Positions 168-189 (TEAERLEQEQKQKQYDENRKET) are enriched in basic and acidic residues. A compositionally biased stretch (low complexity) spans 2817-2826 (NNNNNNNRYN). Residues 2853 to 2857 (DTAGQ), 2913 to 2916 (TKAD), and 2976 to 2983 (GDGGIGKS) each bind GTP. 3 disordered regions span residues 3036–3086 (LQSA…LSSR), 3107–3142 (RKSS…QDYE), and 3733–3754 (VIEP…PSSS). Residues 3070–3086 (PSSSSTRTSVSTSLSSR) are compositionally biased toward low complexity. The span at 3107–3120 (RKSSLVEEESKRQY) shows a compositional bias: basic and acidic residues. Residues 3121–3141 (DDDDESKSESSEYDDDDDQDY) are compositionally biased toward acidic residues.

It belongs to the small GTPase superfamily. CpRas family.

In Dictyostelium discoideum (Social amoeba), this protein is Circularly permutated Ras protein 2 (cpras2).